We begin with the raw amino-acid sequence, 79 residues long: RNA-binding protein Hfq (79 aa).

Positions 10–70 (DVFLNTVRKQ…ISTIMPGQPV (61 aa)) constitute a Sm domain.

It belongs to the Hfq family. As to quaternary structure, homohexamer.

Functionally, RNA chaperone that binds small regulatory RNA (sRNAs) and mRNAs to facilitate mRNA translational regulation in response to envelope stress, environmental stress and changes in metabolite concentrations. Also binds with high specificity to tRNAs. The polypeptide is RNA-binding protein Hfq (Bartonella tribocorum (strain CIP 105476 / IBS 506)).